The sequence spans 183 residues: Adenylate kinase (183 aa).

12 to 17 (GAGKGT) is a binding site for ATP. An NMP region spans residues 32–61 (STGDLLRSEVSAGSALGQEAEAVMNRGELV). AMP is bound by residues Thr33, Arg38, 59–61 (ELV), 86–89 (GFPR), and Gln93. The interval 127-133 (ARGRADD) is LID. Position 128 (Arg128) interacts with ATP. AMP contacts are provided by Arg130 and Arg141. Gly169 is a binding site for ATP.

Belongs to the adenylate kinase family. Monomer.

It is found in the cytoplasm. It carries out the reaction AMP + ATP = 2 ADP. Its pathway is purine metabolism; AMP biosynthesis via salvage pathway; AMP from ADP: step 1/1. In terms of biological role, catalyzes the reversible transfer of the terminal phosphate group between ATP and AMP. Plays an important role in cellular energy homeostasis and in adenine nucleotide metabolism. This Synechococcus sp. (strain WH7803) protein is Adenylate kinase.